A 359-amino-acid chain; its full sequence is MQAATVVINRRALRHNLQRLRELAPASKLVAVVKANAYGHGLLETARTLPDADAFGVARLEEALRLRAGGITQPILLLEGFFDAADLPTISAQCLHTAVHNQEQLAALEAVELAEPVTVWMKLDTGMHRLGVRPEEAEAFYQRLTHCKNVRQPVNIVSHFARADEPECGATEHQLDIFNAFCQGKPGQRSIAASGGILLWPQSHFDWARPGIILYGVSPLEHKPWGPDFGFQPVMSLTSSLIAVRDHKAGEPVGYGGTWVSERDTRLGVVAMGYGDGYPRAAPSGTPVLVNGREVPIVGRVAMDMICVDLGPNAQDNAGDPVVLWGEGLPVERIAEMTKVSAYELITRLTSRVAMKYID.

The active-site Proton acceptor; specific for D-alanine is the lysine 34. An N6-(pyridoxal phosphate)lysine modification is found at lysine 34. Residue arginine 129 participates in substrate binding. The active-site Proton acceptor; specific for L-alanine is tyrosine 255. Methionine 303 contributes to the substrate binding site.

This sequence belongs to the alanine racemase family. Pyridoxal 5'-phosphate serves as cofactor.

It carries out the reaction L-alanine = D-alanine. It participates in amino-acid biosynthesis; D-alanine biosynthesis; D-alanine from L-alanine: step 1/1. Its pathway is cell wall biogenesis; peptidoglycan biosynthesis. Its function is as follows. Catalyzes the interconversion of L-alanine and D-alanine. Provides the D-alanine required for cell wall biosynthesis. The polypeptide is Alanine racemase, biosynthetic (alr) (Salmonella typhi).